A 476-amino-acid polypeptide reads, in one-letter code: Glycogen synthase (476 aa).

Lys15 contacts ADP-alpha-D-glucose.

The protein belongs to the glycosyltransferase 1 family. Bacterial/plant glycogen synthase subfamily.

The enzyme catalyses [(1-&gt;4)-alpha-D-glucosyl](n) + ADP-alpha-D-glucose = [(1-&gt;4)-alpha-D-glucosyl](n+1) + ADP + H(+). It participates in glycan biosynthesis; glycogen biosynthesis. Its function is as follows. Synthesizes alpha-1,4-glucan chains using ADP-glucose. This Lactobacillus acidophilus (strain ATCC 700396 / NCK56 / N2 / NCFM) protein is Glycogen synthase.